A 384-amino-acid chain; its full sequence is Galactokinase (384 aa).

Residue 34–37 coordinates substrate; that stretch reads EHTD. 123-129 lines the ATP pocket; sequence SSGLSSS. The Mg(2+) site is built by Ser129 and Glu161. Asp173 serves as the catalytic Proton acceptor. Tyr222 serves as a coordination point for substrate.

Belongs to the GHMP kinase family. GalK subfamily.

The protein resides in the cytoplasm. The catalysed reaction is alpha-D-galactose + ATP = alpha-D-galactose 1-phosphate + ADP + H(+). Its pathway is carbohydrate metabolism; galactose metabolism. Functionally, catalyzes the transfer of the gamma-phosphate of ATP to D-galactose to form alpha-D-galactose-1-phosphate (Gal-1-P). This Haemophilus influenzae (strain PittGG) protein is Galactokinase.